The chain runs to 450 residues: 23S rRNA (uracil(1939)-C(5))-methyltransferase RlmD (450 aa).

The TRAM domain maps to 1 to 62; sequence MPVAGPLDIV…PSYEQAGVVN (62 aa). Residues C75, C81, C84, and C163 each coordinate [4Fe-4S] cluster. Q271, F300, N305, E321, N349, and D370 together coordinate S-adenosyl-L-methionine. C406 (nucleophile) is an active-site residue.

It belongs to the class I-like SAM-binding methyltransferase superfamily. RNA M5U methyltransferase family. RlmD subfamily.

The enzyme catalyses uridine(1939) in 23S rRNA + S-adenosyl-L-methionine = 5-methyluridine(1939) in 23S rRNA + S-adenosyl-L-homocysteine + H(+). Functionally, catalyzes the formation of 5-methyl-uridine at position 1939 (m5U1939) in 23S rRNA. The polypeptide is 23S rRNA (uracil(1939)-C(5))-methyltransferase RlmD (Ralstonia pickettii (strain 12J)).